Here is a 269-residue protein sequence, read N- to C-terminus: Putative phosphatase M6_Spy0533 (269 aa).

D9 functions as the Nucleophile in the catalytic mechanism. Position 9 (D9) interacts with Mg(2+). I10 provides a ligand contact to phosphate. Position 11 (D11) interacts with Mg(2+). Phosphate is bound by residues T43–G44 and K196. D219 lines the Mg(2+) pocket. N222 serves as a coordination point for phosphate.

Mg(2+) is required as a cofactor.

This chain is Putative phosphatase M6_Spy0533, found in Streptococcus pyogenes serotype M6 (strain ATCC BAA-946 / MGAS10394).